The primary structure comprises 239 residues: Methylthioribulose-1-phosphate dehydratase (239 aa).

C94 is a substrate binding site. Positions 112 and 114 each coordinate Zn(2+). The active-site Proton donor/acceptor is the E136. Position 192 (H192) interacts with Zn(2+).

It belongs to the aldolase class II family. MtnB subfamily. The cofactor is Zn(2+).

It is found in the cytoplasm. The enzyme catalyses 5-(methylsulfanyl)-D-ribulose 1-phosphate = 5-methylsulfanyl-2,3-dioxopentyl phosphate + H2O. It participates in amino-acid biosynthesis; L-methionine biosynthesis via salvage pathway; L-methionine from S-methyl-5-thio-alpha-D-ribose 1-phosphate: step 2/6. Catalyzes the dehydration of methylthioribulose-1-phosphate (MTRu-1-P) into 2,3-diketo-5-methylthiopentyl-1-phosphate (DK-MTP-1-P). Functions in the methionine salvage pathway. May play a role in apoptosis. This Xenopus tropicalis (Western clawed frog) protein is Methylthioribulose-1-phosphate dehydratase.